The chain runs to 143 residues: Large ribosomal subunit protein uL11 (143 aa).

It belongs to the universal ribosomal protein uL11 family. Part of the ribosomal stalk of the 50S ribosomal subunit. Interacts with L10 and the large rRNA to form the base of the stalk. L10 forms an elongated spine to which L12 dimers bind in a sequential fashion forming a multimeric L10(L12)X complex. One or more lysine residues are methylated.

In terms of biological role, forms part of the ribosomal stalk which helps the ribosome interact with GTP-bound translation factors. The chain is Large ribosomal subunit protein uL11 from Leifsonia xyli subsp. xyli (strain CTCB07).